We begin with the raw amino-acid sequence, 431 residues long: Mitochondrial inner membrane protein OXA1-like (431 aa).

The N-terminal 22 residues, 1 to 22 (MATCLRGITKRVNLLQRRVYPS), are a transit peptide targeting the mitochondrion. Transmembrane regions (helical) follow at residues 119 to 139 (VVPAINEVAIAAADSAFPVAA), 155 to 175 (WWASIALTTVLIRGVTIPILL), 227 to 247 (FTPLKGLIIQGPIFISFFFAI), 269 to 289 (TTTDTTYILPLLTAVTFLIMV), and 312 to 332 (IIAFLSIPVLIGIEKALFCYW). The disordered stretch occupies residues 362 to 414 (NSSTRQPSPSSPLPFSFAEPKDQSVVAQEKPPMSSESSSSVPDRRISRSSVLN). The span at 392 to 402 (PPMSSESSSSV) shows a compositional bias: low complexity.

It belongs to the OXA1/ALB3/YidC (TC 2.A.9.2) family.

Its subcellular location is the mitochondrion inner membrane. Probably required for the insertion of integral membrane proteins into the mitochondrial inner membrane. May participate in the activity and assembly of cytochrome oxidase. The polypeptide is Mitochondrial inner membrane protein OXA1-like (OXA1L) (Arabidopsis thaliana (Mouse-ear cress)).